Reading from the N-terminus, the 311-residue chain is GPN-loop GTPase 2 (311 aa).

20-25 (GSGKTT) provides a ligand contact to GTP. A Gly-Pro-Asn (GPN)-loop; involved in dimer interface motif is present at residues 77 to 79 (GPN). A GTP-binding site is contributed by 179-182 (SKMD).

This sequence belongs to the GPN-loop GTPase family. As to quaternary structure, heterodimers with gpn1 or gpn3. Binds to RNA polymerase II (RNAPII).

Small GTPase required for proper localization of RNA polymerase II and III (RNAPII and RNAPIII). May act at an RNAP assembly step prior to nuclear import. The protein is GPN-loop GTPase 2 of Danio rerio (Zebrafish).